A 442-amino-acid polypeptide reads, in one-letter code: UDP-glycosyltransferase 78D4 (442 aa).

UDP-alpha-D-glucose-binding positions include 322–324 (APQ), 339–347 (HGGWNSVLE), and 361–364 (FGDH).

This sequence belongs to the UDP-glycosyltransferase family.

This chain is UDP-glycosyltransferase 78D4 (UGT78D4), found in Arabidopsis thaliana (Mouse-ear cress).